The chain runs to 188 residues: MSVLPTPLANQLLIALPALSDPTFSRSVALICQHDENGAMGVLVNRPSEYTLGEVLSQMGIDTDDEPLREQIVLSGGPVHPERGFVIHDDAREWDSSLEVGQGVFLTTSRDILEAMAAGNGPRNVLVALGCAGWGAGQLEFELGENSWLTAPSDANVLFATALEDRWQTAAGRIGVDLFRLTDYSGHA.

Belongs to the UPF0301 (AlgH) family.

In Xanthomonas oryzae pv. oryzae (strain MAFF 311018), this protein is UPF0301 protein XOO1309.